The sequence spans 414 residues: MAEEMEETHCMALNVENFKACAKIHNHVKNYLKKGLVQIVGFETEPVFQIMATACDGGILVFKVLNPFESFNVSYSRMETLSLSFKNQPHGNTYLYSKDLFGEAVKGASLTFLQRPGLCRPDFVRSDVLMDDDVTTSSHCTSLTSWSPPAHDIRAGTVMSKVVLSIKTCTMLQKWLKDQKSKGEPRCVRLCLNEILSVLVLSVGEASKTVHLKPVEGNPATSLLFADKQGDVCIISDDEAHDVSLDSLLAALGVCRIPALCLPCFNFHSNGVLEVVGLQFKSSKPASGELSVFLLRANPQVDFNGVPEGDVQTQEVSSVASTCRHLSESCSLDPPRTPELPGSPDTFKEIPGRSGSVHLERDLSCSDSEEETPKQKPAKAKPAAAPKRSEKRKREGGKKGPKAKSLKLTFNPLI.

Residues 327 to 414 (SESCSLDPPR…SLKLTFNPLI (88 aa)) are disordered. Over residues 389–405 (SEKRKREGGKKGPKAKS) the composition is skewed to basic residues.

The protein belongs to the herpesviridae DNA polymerase accessory subunit family.

In terms of biological role, increases the processivity of the viral polymerase, probably by acting as a sliding clamp that prevents dissociation of the polymerase from the active template. The polypeptide is DNA polymerase processivity factor (59) (Equine herpesvirus 2 (strain 86/87) (EHV-2)).